The chain runs to 555 residues: F-box protein COS111 (555 aa).

Disordered regions lie at residues 31-82 (MSVS…SVSN) and 124-147 (DHSI…KQHH). Low complexity predominate over residues 32 to 42 (SVSSRSSQEES). Positions 48–61 (ESVSSLSMQEQQTE) are enriched in polar residues. A compositionally biased stretch (low complexity) spans 129–142 (SGVTRSTVSTVRPT). Positions 196-246 (HKDLNSLPHEIMSKIVSHLDQRDVTMCLYVNKNMYSTAVRQLYKEPFFSST) constitute an F-box domain. A compositionally biased stretch (low complexity) spans 327-346 (SSSSLSCSRTSSNSNSSTES). Positions 327 to 354 (SSSSLSCSRTSSNSNSSTESKPVKKRRS) are disordered.

Functionally, F-box protein probably involved in ubiquitin conjugation pathway. The polypeptide is F-box protein COS111 (COS111) (Yarrowia lipolytica (strain CLIB 122 / E 150) (Yeast)).